Here is a 90-residue protein sequence, read N- to C-terminus: NAD(P)H-quinone oxidoreductase subunit H, chloroplastic (90 aa).

The protein belongs to the complex I 49 kDa subunit family. NDH is composed of at least 16 different subunits, 5 of which are encoded in the nucleus.

The protein resides in the plastid. The protein localises to the chloroplast thylakoid membrane. It carries out the reaction a plastoquinone + NADH + (n+1) H(+)(in) = a plastoquinol + NAD(+) + n H(+)(out). The catalysed reaction is a plastoquinone + NADPH + (n+1) H(+)(in) = a plastoquinol + NADP(+) + n H(+)(out). In terms of biological role, NDH shuttles electrons from NAD(P)H:plastoquinone, via FMN and iron-sulfur (Fe-S) centers, to quinones in the photosynthetic chain and possibly in a chloroplast respiratory chain. The immediate electron acceptor for the enzyme in this species is believed to be plastoquinone. Couples the redox reaction to proton translocation, and thus conserves the redox energy in a proton gradient. This Secale cereale (Rye) protein is NAD(P)H-quinone oxidoreductase subunit H, chloroplastic (ndhH).